Consider the following 642-residue polypeptide: Threonine--tRNA ligase (642 aa).

Residues 1-63 (MSEIVVTLPD…TDDCELVIVT (63 aa)) enclose the TGS domain. The tract at residues 242–533 (DHRKLGQELD…LIEHFDGNFP (292 aa)) is catalytic. The Zn(2+) site is built by C334, H385, and H510.

The protein belongs to the class-II aminoacyl-tRNA synthetase family. In terms of assembly, homodimer. Zn(2+) serves as cofactor.

It is found in the cytoplasm. The catalysed reaction is tRNA(Thr) + L-threonine + ATP = L-threonyl-tRNA(Thr) + AMP + diphosphate + H(+). Functionally, catalyzes the attachment of threonine to tRNA(Thr) in a two-step reaction: L-threonine is first activated by ATP to form Thr-AMP and then transferred to the acceptor end of tRNA(Thr). The polypeptide is Threonine--tRNA ligase (Natronomonas pharaonis (strain ATCC 35678 / DSM 2160 / CIP 103997 / JCM 8858 / NBRC 14720 / NCIMB 2260 / Gabara) (Halobacterium pharaonis)).